A 232-amino-acid chain; its full sequence is U2 small nuclear ribonucleoprotein B'' (232 aa).

The RRM 1 domain maps to 10-89 (QTVYLRNLNE…KRMRVQYAKT (80 aa)). The tract at residues 92-159 (DCLATEDGST…QEPPAPPNNI (68 aa)) is disordered. The segment covering 108-123 (KKQEEKAAEKKRRAEE) has biased composition (basic and acidic residues). The span at 127–151 (SGPNAAAQSNGTGYQASRLGKTSQE) shows a compositional bias: polar residues. In terms of domain architecture, RRM 2 spans 158–232 (NILFIQNLPA…NPMAISYAKK (75 aa)).

This sequence belongs to the RRM U1 A/B'' family. As to quaternary structure, component of the spliceosome where it is associated with snRNP U2.

It is found in the nucleus. The protein localises to the cajal body. It localises to the nucleoplasm. Its subcellular location is the cytoplasm. Involved in nuclear pre-mRNA splicing. This chain is U2 small nuclear ribonucleoprotein B'', found in Oryza sativa subsp. indica (Rice).